Consider the following 136-residue polypeptide: FK506-binding protein 2 (136 aa).

The N-terminal stretch at 1-17 (MLSQIWILFTFMVCVIA) is a signal peptide. Positions 45 to 134 (GDMVSVHYTG…DFDVELVDIA (90 aa)) constitute a PPIase FKBP-type domain.

The protein belongs to the FKBP-type PPIase family. FKBP2 subfamily.

Its subcellular location is the endoplasmic reticulum. It catalyses the reaction [protein]-peptidylproline (omega=180) = [protein]-peptidylproline (omega=0). With respect to regulation, inhibited by both FK506 and rapamycin. PPIases accelerate the folding of proteins. It catalyzes the cis-trans isomerization of proline imidic peptide bonds in oligopeptides. The chain is FK506-binding protein 2 (FPR2) from Candida glabrata (strain ATCC 2001 / BCRC 20586 / JCM 3761 / NBRC 0622 / NRRL Y-65 / CBS 138) (Yeast).